The chain runs to 153 residues: Gamma-glutamylaminecyclotransferase (153 aa).

7 to 10 (YGTL) lines the substrate pocket. Residue E82 is the Proton acceptor of the active site. Residues 130 to 153 (QLPHHDSYDSEGPHGLRYNPRENR) form a disordered region. Positions 132–153 (PHHDSYDSEGPHGLRYNPRENR) are enriched in basic and acidic residues.

It belongs to the gamma-glutamylcyclotransferase family. In terms of assembly, monomer.

It carries out the reaction epsilon-(gamma-L-glutamyl)-L-lysine = 5-oxo-L-proline + L-lysine. In terms of biological role, contributes to degradation of proteins cross-linked by transglutaminases by degrading the cross-link between a lysine and a glutamic acid residue. Catalyzes the formation of 5-oxo-L-proline from L-gamma-glutamyl-L-epsilon-lysine. Inactive with L-gamma-glutamyl-alpha-amino acid substrates such as L-gamma-glutamyl-L-alpha-cysteine and L-gamma-glutamyl-L-alpha-alanine. The polypeptide is Gamma-glutamylaminecyclotransferase (GGACT) (Homo sapiens (Human)).